Here is a 279-residue protein sequence, read N- to C-terminus: NADPH-dependent 7-cyano-7-deazaguanine reductase (279 aa).

Substrate is bound at residue I86–S88. Residue S88–K89 participates in NADPH binding. Catalysis depends on C187, which acts as the Thioimide intermediate. Residue D194 is the Proton donor of the active site. Residue H226–E227 coordinates substrate. R255 to G256 provides a ligand contact to NADPH.

This sequence belongs to the GTP cyclohydrolase I family. QueF type 2 subfamily. Homodimer.

It localises to the cytoplasm. It catalyses the reaction 7-aminomethyl-7-carbaguanine + 2 NADP(+) = 7-cyano-7-deazaguanine + 2 NADPH + 3 H(+). It functions in the pathway tRNA modification; tRNA-queuosine biosynthesis. Its function is as follows. Catalyzes the NADPH-dependent reduction of 7-cyano-7-deazaguanine (preQ0) to 7-aminomethyl-7-deazaguanine (preQ1). The polypeptide is NADPH-dependent 7-cyano-7-deazaguanine reductase (Glaesserella parasuis serovar 5 (strain SH0165) (Haemophilus parasuis)).